The chain runs to 173 residues: uncharacterized protein (173 aa).

4 consecutive transmembrane segments (helical) span residues 9–29 (FSIC…LLCV), 32–52 (ICSA…TFFH), 100–120 (MFLC…SFIV), and 127–147 (FLFL…GLYP).

It localises to the membrane. This is an uncharacterized protein from Saccharomyces cerevisiae (strain ATCC 204508 / S288c) (Baker's yeast).